We begin with the raw amino-acid sequence, 377 residues long: Succinyl-diaminopimelate desuccinylase (377 aa).

Residue His-66 participates in Zn(2+) binding. Asp-68 is a catalytic residue. Asp-99 is a Zn(2+) binding site. Catalysis depends on Glu-133, which acts as the Proton acceptor. 3 residues coordinate Zn(2+): Glu-134, Glu-162, and His-348.

Belongs to the peptidase M20A family. DapE subfamily. In terms of assembly, homodimer. The cofactor is Zn(2+). Co(2+) serves as cofactor.

It carries out the reaction N-succinyl-(2S,6S)-2,6-diaminopimelate + H2O = (2S,6S)-2,6-diaminopimelate + succinate. It participates in amino-acid biosynthesis; L-lysine biosynthesis via DAP pathway; LL-2,6-diaminopimelate from (S)-tetrahydrodipicolinate (succinylase route): step 3/3. In terms of biological role, catalyzes the hydrolysis of N-succinyl-L,L-diaminopimelic acid (SDAP), forming succinate and LL-2,6-diaminopimelate (DAP), an intermediate involved in the bacterial biosynthesis of lysine and meso-diaminopimelic acid, an essential component of bacterial cell walls. The sequence is that of Succinyl-diaminopimelate desuccinylase from Alcanivorax borkumensis (strain ATCC 700651 / DSM 11573 / NCIMB 13689 / SK2).